The chain runs to 340 residues: Probable rRNA-processing protein EBP2 homolog (340 aa).

The span at 1 to 10 shows a compositional bias: basic residues; that stretch reads MVRKMNKLAK. Disordered stretches follow at residues 1–59 and 245–340; these read MVRK…DDDE and HGLD…RGRR. Acidic residues-rich tracts occupy residues 23 to 37 and 46 to 59; these read PESD…FDNA and MDIE…DDDE. Residues 206 to 245 adopt a coiled-coil conformation; sequence QKEVLAAKNTEKKNLAEAVKKHKKGMKQQLEDMLNNVKRH. Gly residues-rich tracts occupy residues 264-277 and 318-333; these read GRGG…GRGG and PRGG…GRGG.

This sequence belongs to the EBP2 family.

The protein localises to the nucleus. It localises to the nucleolus. Its function is as follows. Required for the processing of the 27S pre-rRNA. This Caenorhabditis elegans protein is Probable rRNA-processing protein EBP2 homolog.